The following is a 301-amino-acid chain: Chitosanase (301 aa).

The first 42 residues, 1-42 (MHMSNARPSKSRTKFLLAFLCFTLMASLFGATALFGPSKAAA), serve as a signal peptide directing secretion. The active-site Proton donor is the Glu-79. The cysteines at positions 92 and 166 are disulfide-linked. The Nucleophile role is filled by Asp-97.

The protein belongs to the glycosyl hydrolase 46 family.

It is found in the secreted. The catalysed reaction is Endohydrolysis of beta-(1-&gt;4)-linkages between D-glucosamine residues in a partly acetylated chitosan.. Its function is as follows. Aids in the defense against invading fungal pathogens by degrading their cell wall chitosan. This Niallia circulans (Bacillus circulans) protein is Chitosanase (csn).